The primary structure comprises 2178 residues: Streptococcal hemagglutinin (2178 aa).

An N-terminal signal peptide occupies residues 1 to 90 (MFFKRQKGQY…AVVTSSSVYA (90 aa)). Positions 91-137 (EEEQALEKVIDTRDVLATRGEAVLSEEAATTLSSEGANPVESLSDTL) are non-repeat region 1 (NR1). The segment at 138-219 (SASESASANS…SLISSDSSNS (82 aa)) is ser-rich region 1 (SR1). Residues 192-244 (TSQSFSSTTSSTQSSNNESLISSDSSNSLNTNQSVSARNQNARVRTRRAVAAN) are compositionally biased toward low complexity. Disordered regions lie at residues 192 to 246 (TSQS…ANDT), 495 to 557 (VSAS…SVSA), 584 to 653 (SAST…SVSA), 836 to 857 (SAST…SVSA), 884 to 917 (SAST…SVSA), 944 to 993 (SAST…SESA), 1020 to 1289 (SASV…SVSA), 1341 to 1390 (ASTS…ESAS), 1488 to 1685 (SASV…SVSA), 1725 to 1901 (ASTS…SAST), and 2119 to 2151 (LSQS…GESE). Residues 220-449 (LNTNQSVSAR…ANRVVKDLQI (230 aa)) form a non-repeat region 2 (NR2) region. Residues 450-2143 (SKSNSASQSS…SMHDRISKGQ (1694 aa)) form a ser-rich region 2 (SR2) region. A compositionally biased stretch (low complexity) spans 2119-2130 (LSQSLSDSQSTS). Residues 2144 to 2148 (LPRTG) carry the LPXTG sorting signal motif. Threonine 2147 bears the Pentaglycyl murein peptidoglycan amidated threonine mark. A propeptide spans 2148–2178 (GESESKASILALGIGALGLAFKKRKKNESED) (removed by sortase).

This sequence belongs to the serine-rich repeat protein (SRRP) family. Post-translationally, the protein is glycosylated in vivo; constructs without SR1 and SR2 are not glycosylated.

Its subcellular location is the secreted. The protein resides in the cell wall. Functionally, a cell wall protein involved with PadA in host cell interactions required for colonization and pathogensis. Mediates hemagglutination and adherence to ghst glycoproteins. Recognizes fetuin-A (AHSG), a highly glycosylated human plasma protein, also involved in recognition of human platelets, probably via platelet glycoprotein Ib alpha (GP1BA). Acts in concert with PadA to promote binding to glycosylated human fibronectin (FN1) and vitronectin (VTN), and biofilm formation. Plays a major role in fibronectin and vitronectin binding; binding is mediated by glycosylated regions. Probably mediates interaction of PadA with resting platelets. The sequence is that of Streptococcal hemagglutinin from Streptococcus gordonii (strain Challis / ATCC 35105 / BCRC 15272 / CH1 / DL1 / V288).